The chain runs to 510 residues: O-acetyltransferase pyr7 (510 aa).

The protein belongs to the fumigaclavine B O-acetyltransferase family.

The protein operates within secondary metabolite biosynthesis; terpenoid biosynthesis. O-acetyltransferase; part of the gene cluster that mediates the biosynthesis of pyripyropene A, a specific human acyl-coenzyme A:cholesterol acyltransferase 2 inhibitor. The first step of the pathway is the synthesis of nicotinyl-CoA from nicotinic acid by the nicotinic acid-CoA ligase pyr1. Nicotinyl-CoA is then a substrate of polyketide synthase pyr2 to produce 4-hydroxy-6-(3-pyridinyl)-2H-pyran-2-one (HPPO) which is further prenylated by the polyprenyl transferase pyr6 to yield farnesyl-HPPO. The next steps consist of an epoxidation of farnesyl-HPPO to epoxyfarnesyl-HPPO by FAD-dependent monooxygenase pyr5 and a cyclization of the terpenoid portion by the terpene cyclase pyr4 to yield deacetyl-pyripyropene E. The 2 cytochrome P450 monooxygenases pyr3 and pyr9, and the 2 acetyltransferases pyr7 and pyr8 are involved in the conversion of deacetyl-pyripyropene E into pyripyropene A through several cycles of oxidation and acetylation steps. Pyr7 acetylates deacetyl-pyripyropene E to pyripyropene E which is oxidized to 11-deacetyl-pyripyropene O by pyr3, which is in turn acetylated into pyripyropene O by pyr8. Pyripyropene O is then oxidized to deacetyl-pyripyropene A by pyr9. Deacetyl-pyripyropene A is finally acetylated to pyripyropene A by pyr8. This is O-acetyltransferase pyr7 from Aspergillus fumigatus (strain ATCC MYA-4609 / CBS 101355 / FGSC A1100 / Af293) (Neosartorya fumigata).